The primary structure comprises 1228 residues: DNA-directed RNA polymerase subunit beta'' (1228 aa).

Cys222, Cys296, Cys303, and Cys306 together coordinate Zn(2+).

It belongs to the RNA polymerase beta' chain family. RpoC2 subfamily. In plastids the minimal PEP RNA polymerase catalytic core is composed of four subunits: alpha, beta, beta', and beta''. When a (nuclear-encoded) sigma factor is associated with the core the holoenzyme is formed, which can initiate transcription. Zn(2+) is required as a cofactor.

The protein localises to the plastid. It is found in the chloroplast. The enzyme catalyses RNA(n) + a ribonucleoside 5'-triphosphate = RNA(n+1) + diphosphate. Its function is as follows. DNA-dependent RNA polymerase catalyzes the transcription of DNA into RNA using the four ribonucleoside triphosphates as substrates. The protein is DNA-directed RNA polymerase subunit beta'' of Gracilaria tenuistipitata var. liui (Red alga).